The following is a 120-amino-acid chain: Aspartate 1-decarboxylase (120 aa).

Serine 25 functions as the Schiff-base intermediate with substrate; via pyruvic acid in the catalytic mechanism. Position 25 is a pyruvic acid (Ser) (serine 25). Threonine 57 contacts substrate. Tyrosine 58 acts as the Proton donor in catalysis. A substrate-binding site is contributed by 73 to 75 (GAA).

This sequence belongs to the PanD family. As to quaternary structure, heterooctamer of four alpha and four beta subunits. It depends on pyruvate as a cofactor. In terms of processing, is synthesized initially as an inactive proenzyme, which is activated by self-cleavage at a specific serine bond to produce a beta-subunit with a hydroxyl group at its C-terminus and an alpha-subunit with a pyruvoyl group at its N-terminus.

Its subcellular location is the cytoplasm. The catalysed reaction is L-aspartate + H(+) = beta-alanine + CO2. The protein operates within cofactor biosynthesis; (R)-pantothenate biosynthesis; beta-alanine from L-aspartate: step 1/1. Functionally, catalyzes the pyruvoyl-dependent decarboxylation of aspartate to produce beta-alanine. The protein is Aspartate 1-decarboxylase of Methylibium petroleiphilum (strain ATCC BAA-1232 / LMG 22953 / PM1).